The following is a 283-amino-acid chain: MNQILNAQRLIQLSQFHPKLKNIWYLVAAATFSVCNEPQEIPKLYHYAMLLSNDNAHMYRFTLASQTIDLLRSELPMRKTLINENYQQPTFFQKQLTAKFREVILKTGPLAGLPRAINGLTMLKETTPDILVPHLDPIDPWEAAMGNSSPLSETSMRRKHDKTIQERDHTIQNGLRHWNSIYNKVSTRVVNNLNSSYPDLWYYTLVHVYGPLFAFDEILSAQETSLVIIASLVPQDVNPQLRGHLKGALNIGCDKETVEAVRGLAILISQWCGVSWKSGVVKL.

The Peroxisomal target signal 1 (PTS1) motif lies at 281-283 (VKL).

This sequence belongs to the PXP2 family.

It localises to the peroxisome matrix. It is found in the cytoplasm. The protein localises to the cytosol. In terms of biological role, probably involved in peroxisome formation or maintenance as well as in amino acid metabolism. This is Peroxisomal protein 2 from Saccharomyces cerevisiae (strain ATCC 204508 / S288c) (Baker's yeast).